The following is a 689-amino-acid chain: MSEKTFLVEIGTEELPPKALRSLAESFAANVTAELDNAGLAHGNVEWFAAPRRLALKVANLAASQPDREVEKRGPAIAQAFDAEGKPSKAAEGWARGCGITVDQAERLTTDKGEWLLYRAHVKGESAEALLPNMIATSLAKLPIPKLMRWGASDVHFVRPVHTVTLLLGDKLIPATILGIQSDRVIRGHRFMGEPEITIDTADQYPQILLERGKVVADYEARKAKIKADAEEAARQIGGNADLSESLLEEVTSLVEWPVVLTAKFEEKFLAVPSEALVYTMKGDQKYFPVYAADGKLLPNFIFVANIESKDPQQIISGNEKVVRPRLADAEFFFNTDRKKRLEDNLPRLQTVLFQQQLGTLRDKTDRIQALAGWIAEQIGADVNHATRAGLLSKCDLMTNMVFEFTDTQGVMGMHYARHDGEAEDVAVALNEQYQPRFAGDDLPSNPVACALAIADKMDTLAGIFGIGQHPKGDKDPFALRRAALGVLRIIVEKNLNLDLKTLTEEAARLYGDKLTNANVVDDVIDFMLGRFRAWYQDEGYTVDTIQAVLARRPTRPADFDARMKAVSHFRTLEEASALAAANKRVSNILAKSDEVLNDRVNAATLKEPEEIALALQVVVLRDKLEPVFAEGRYQEALVELAELREPVDTFFEKVMVMVDDKDLRINRLSMLAKLRELFLQVADISLLQ.

The protein belongs to the class-II aminoacyl-tRNA synthetase family. As to quaternary structure, tetramer of two alpha and two beta subunits.

The protein localises to the cytoplasm. It carries out the reaction tRNA(Gly) + glycine + ATP = glycyl-tRNA(Gly) + AMP + diphosphate. In Citrobacter koseri (strain ATCC BAA-895 / CDC 4225-83 / SGSC4696), this protein is Glycine--tRNA ligase beta subunit.